The chain runs to 453 residues: Chromosomal replication initiator protein DnaA (453 aa).

Residues 1–73 (MSKEEIWDKV…ADLIEKAIGT (73 aa)) are domain I, interacts with DnaA modulators. The segment at 73–114 (TKLMPNFVIQEDLTEDKQVKDSAKAKSEAKPDVQAPQNSSED) is domain II. Over residues 91–103 (VKDSAKAKSEAKP) the composition is skewed to basic and acidic residues. The interval 91 to 113 (VKDSAKAKSEAKPDVQAPQNSSE) is disordered. The interval 115–331 (QFNVHNTFET…GALTRVIAYS (217 aa)) is domain III, AAA+ region. Positions 159, 161, 162, and 163 each coordinate ATP. The interval 332 to 453 (RLQNEAITTE…ENLEKEIRNQ (122 aa)) is domain IV, binds dsDNA.

It belongs to the DnaA family. As to quaternary structure, oligomerizes as a right-handed, spiral filament on DNA at oriC.

It is found in the cytoplasm. Plays an essential role in the initiation and regulation of chromosomal replication. ATP-DnaA binds to the origin of replication (oriC) to initiate formation of the DNA replication initiation complex once per cell cycle. Binds the DnaA box (a 9 base pair repeat at the origin) and separates the double-stranded (ds)DNA. Forms a right-handed helical filament on oriC DNA; dsDNA binds to the exterior of the filament while single-stranded (ss)DNA is stabiized in the filament's interior. The ATP-DnaA-oriC complex binds and stabilizes one strand of the AT-rich DNA unwinding element (DUE), permitting loading of DNA polymerase. After initiation quickly degrades to an ADP-DnaA complex that is not apt for DNA replication. Binds acidic phospholipids. In Staphylococcus carnosus (strain TM300), this protein is Chromosomal replication initiator protein DnaA.